We begin with the raw amino-acid sequence, 262 residues long: Cytochrome c oxidase subunit 2 (262 aa).

2 helical membrane passes run 31-51 and 72-92; these read HIMF…YVII and IIWT…SFIL. 6 residues coordinate Cu cation: H175, C210, E212, C214, H218, and M221. E212 provides a ligand contact to Mg(2+).

The protein belongs to the cytochrome c oxidase subunit 2 family. Component of the cytochrome c oxidase (complex IV, CIV), a multisubunit enzyme composed of a catalytic core of 3 subunits and several supernumerary subunits. The complex exists as a monomer or a dimer and forms supercomplexes (SCs) in the inner mitochondrial membrane with ubiquinol-cytochrome c oxidoreductase (cytochrome b-c1 complex, complex III, CIII). Requires Cu cation as cofactor.

It localises to the mitochondrion inner membrane. The catalysed reaction is 4 Fe(II)-[cytochrome c] + O2 + 8 H(+)(in) = 4 Fe(III)-[cytochrome c] + 2 H2O + 4 H(+)(out). Functionally, component of the cytochrome c oxidase, the last enzyme in the mitochondrial electron transport chain which drives oxidative phosphorylation. The respiratory chain contains 3 multisubunit complexes succinate dehydrogenase (complex II, CII), ubiquinol-cytochrome c oxidoreductase (cytochrome b-c1 complex, complex III, CIII) and cytochrome c oxidase (complex IV, CIV), that cooperate to transfer electrons derived from NADH and succinate to molecular oxygen, creating an electrochemical gradient over the inner membrane that drives transmembrane transport and the ATP synthase. Cytochrome c oxidase is the component of the respiratory chain that catalyzes the reduction of oxygen to water. Electrons originating from reduced cytochrome c in the intermembrane space (IMS) are transferred via the dinuclear copper A center (CU(A)) of subunit 2 and heme A of subunit 1 to the active site in subunit 1, a binuclear center (BNC) formed by heme A3 and copper B (CU(B)). The BNC reduces molecular oxygen to 2 water molecules using 4 electrons from cytochrome c in the IMS and 4 protons from the mitochondrial matrix. This is Cytochrome c oxidase subunit 2 (COX2) from Candida albicans (strain SC5314 / ATCC MYA-2876) (Yeast).